Consider the following 408-residue polypeptide: CinA-like protein (408 aa).

It belongs to the CinA family.

The polypeptide is CinA-like protein (Thermotoga maritima (strain ATCC 43589 / DSM 3109 / JCM 10099 / NBRC 100826 / MSB8)).